A 235-amino-acid chain; its full sequence is Zinc transporter ZIP9 (235 aa).

Asparagine 2 is a glycosylation site (N-linked (GlcNAc...) asparagine). The next 4 membrane-spanning stretches (helical) occupy residues 11–31 (SCVPILVFPSYWASFSCCWWT), 75–95 (TTTLGLVVHAAADGVALGAAA), 104–124 (LIVFVAIMLHKAPAAFGLVSF), and 138–158 (HLLVFSLAAPVMSMVTYLGLS). Asparagine 169 is a glycosylation site (N-linked (GlcNAc...) asparagine). Transmembrane regions (helical) follow at residues 172–192 (GMAMLFSAGTFLYVATVHVLP) and 214–234 (LEVAALVLGCLIPLILSVGHQ).

Belongs to the ZIP transporter (TC 2.A.5) family.

The protein localises to the golgi apparatus. It is found in the trans-Golgi network membrane. It localises to the cell membrane. Its subcellular location is the cytoplasm. The protein resides in the perinuclear region. The protein localises to the mitochondrion. It is found in the nucleus. The catalysed reaction is Zn(2+)(in) = Zn(2+)(out). Transports zinc ions across cell and organelle membranes into the cytoplasm and regulates intracellular zinc homeostasis. Participates in the zinc ions efflux out of the secretory compartments. Regulates intracellular zinc level, resulting in the enhancement of AKT1 and MAPK3/MAPK1 (Erk1/2) phosphorylation in response to the BCR activation. Also functions as a membrane androgen receptor that mediates, through a G protein, the non-classical androgen signaling pathway, characterized by the activation of MAPK3/MAPK1 (Erk1/2) and transcription factors CREB1 or ATF1. This pathway contributes to CLDN1 and CLDN5 expression and tight junction formation between adjacent Sertoli cells. Mediates androgen-induced vascular endothelial cell proliferation through activation of an inhibitory G protein leading to the AKT1 and MAPK3/MAPK1 (Erk1/2) activation which in turn modulate inhibition (phosphorylation) of GSK3B and CCND1 transcription. Moreover, has dual functions as a membrane-bound androgen receptor and as an androgen-dependent zinc transporter both of which are mediated through an inhibitory G protein (Gi) that mediates both MAP kinase and zinc signaling leading to the androgen-dependent apoptotic process. In Macaca fascicularis (Crab-eating macaque), this protein is Zinc transporter ZIP9.